The chain runs to 698 residues: RNA cytosine-C(5)-methyltransferase NSUN2 (698 aa).

Basic residues predominate over residues Met1–Gln10. The segment at Met1–Glu28 is disordered. Positions Arg11–Glu28 are enriched in basic and acidic residues. Residues Cys182–Lys188, Asp213, Asp240, and Asp266 contribute to the S-adenosyl-L-methionine site. The active-site Nucleophile is the Cys319. Residues Ala472 to Cys496 form a disordered region. Over residues Pro482 to Asp493 the composition is skewed to polar residues.

It belongs to the class I-like SAM-binding methyltransferase superfamily. RsmB/NOP family. TRM4 subfamily.

The protein resides in the nucleus. The protein localises to the nucleolus. Its subcellular location is the cytoplasm. It localises to the mitochondrion. It is found in the cytoskeleton. The protein resides in the spindle. The protein localises to the secreted. Its subcellular location is the extracellular exosome. It carries out the reaction cytidine(48) in tRNA + S-adenosyl-L-methionine = 5-methylcytidine(48) in tRNA + S-adenosyl-L-homocysteine + H(+). The enzyme catalyses cytidine(49) in tRNA + S-adenosyl-L-methionine = 5-methylcytidine(49) in tRNA + S-adenosyl-L-homocysteine + H(+). It catalyses the reaction cytidine(50) in tRNA + S-adenosyl-L-methionine = 5-methylcytidine(50) in tRNA + S-adenosyl-L-homocysteine + H(+). The catalysed reaction is cytidine(34) in tRNA precursor + S-adenosyl-L-methionine = 5-methylcytidine(34) in tRNA precursor + S-adenosyl-L-homocysteine + H(+). It carries out the reaction a cytidine in mRNA + S-adenosyl-L-methionine = a 5-methylcytidine in mRNA + S-adenosyl-L-homocysteine + H(+). In terms of biological role, RNA cytosine C(5)-methyltransferase that methylates cytosine to 5-methylcytosine (m5C) in various RNAs, such as tRNAs, mRNAs and some long non-coding RNAs (lncRNAs). Involved in various processes, such as epidermal stem cell differentiation, testis differentiation and maternal to zygotic transition during early development: acts by increasing protein synthesis; cytosine C(5)-methylation promoting tRNA stability and preventing mRNA decay. Methylates cytosine to 5-methylcytosine (m5C) at positions 34 and 48 of intron-containing tRNA(Leu)(CAA) precursors, and at positions 48, 49 and 50 of tRNA(Gly)(GCC) precursors. tRNA methylation is required generation of RNA fragments derived from tRNAs (tRFs). Also mediates C(5)-methylation of mitochondrial tRNAs. Catalyzes cytosine C(5)-methylation of mRNAs, leading to stabilize them and prevent mRNA decay. Cytosine C(5)-methylation of mRNAs also regulates mRNA export. Also mediates cytosine C(5)-methylation of non-coding RNAs, such as vault RNAs (vtRNAs), promoting their processing into regulatory small RNAs. Required for proper spindle assembly and chromosome segregation, independently of its methyltransferase activity. The chain is RNA cytosine-C(5)-methyltransferase NSUN2 from Xenopus laevis (African clawed frog).